A 90-amino-acid chain; its full sequence is Non-structural protein NS-S (90 aa).

This sequence belongs to the hantavirus NS-S protein family.

It is found in the host cytoplasm. Its subcellular location is the host perinuclear region. In terms of biological role, antagonizes host type-I IFN signaling pathway. This is Non-structural protein NS-S (N) from Homo sapiens (Human).